Consider the following 270-residue polypeptide: S-methyl-5'-thioadenosine phosphorylase (270 aa).

Phosphate is bound by residues S16, 58–59, and 91–92; these read RH and SA. Cystine bridges form between C138-C205, C200-C262, and C259-C261. A substrate-binding site is contributed by M190. T191 lines the phosphate pocket. 214–216 serves as a coordination point for substrate; it reads DYD.

The protein belongs to the PNP/MTAP phosphorylase family. MTAP subfamily. Homohexamer. Dimer of a homotrimer.

It carries out the reaction S-methyl-5'-thioadenosine + phosphate = 5-(methylsulfanyl)-alpha-D-ribose 1-phosphate + adenine. It participates in amino-acid biosynthesis; L-methionine biosynthesis via salvage pathway; S-methyl-5-thio-alpha-D-ribose 1-phosphate from S-methyl-5'-thioadenosine (phosphorylase route): step 1/1. Its function is as follows. Catalyzes the reversible phosphorylation of S-methyl-5'-thioadenosine (MTA) to adenine and 5-methylthioribose-1-phosphate. Involved in the breakdown of MTA, a major by-product of polyamine biosynthesis. Responsible for the first step in the methionine salvage pathway after MTA has been generated from S-adenosylmethionine. Has broad substrate specificity with 6-aminopurine nucleosides as preferred substrates. In Saccharolobus solfataricus (strain ATCC 35092 / DSM 1617 / JCM 11322 / P2) (Sulfolobus solfataricus), this protein is S-methyl-5'-thioadenosine phosphorylase.